The sequence spans 599 residues: NADH-quinone oxidoreductase subunit C/D (599 aa).

Positions 1–190 (MMIDQIAQES…DPFELTRQKE (190 aa)) are NADH dehydrogenase I subunit C. Residues 214 to 599 (DFMFLNLGPN…IDFVMSDVDR (386 aa)) are NADH dehydrogenase I subunit D.

In the N-terminal section; belongs to the complex I 30 kDa subunit family. It in the C-terminal section; belongs to the complex I 49 kDa subunit family. NDH-1 is composed of 13 different subunits. Subunits NuoB, CD, E, F, and G constitute the peripheral sector of the complex.

Its subcellular location is the cell inner membrane. The enzyme catalyses a quinone + NADH + 5 H(+)(in) = a quinol + NAD(+) + 4 H(+)(out). Its function is as follows. NDH-1 shuttles electrons from NADH, via FMN and iron-sulfur (Fe-S) centers, to quinones in the respiratory chain. The immediate electron acceptor for the enzyme in this species is believed to be ubiquinone. Couples the redox reaction to proton translocation (for every two electrons transferred, four hydrogen ions are translocated across the cytoplasmic membrane), and thus conserves the redox energy in a proton gradient. The protein is NADH-quinone oxidoreductase subunit C/D of Photorhabdus laumondii subsp. laumondii (strain DSM 15139 / CIP 105565 / TT01) (Photorhabdus luminescens subsp. laumondii).